Here is a 194-residue protein sequence, read N- to C-terminus: Oligoribonuclease (194 aa).

Residues Leu11–Leu174 enclose the Exonuclease domain. The active site involves Tyr132.

This sequence belongs to the oligoribonuclease family.

The protein resides in the cytoplasm. In terms of biological role, 3'-to-5' exoribonuclease specific for small oligoribonucleotides. The protein is Oligoribonuclease of Xanthomonas axonopodis pv. citri (strain 306).